The chain runs to 118 residues: Small ribosomal subunit protein uS13 (118 aa).

The segment at 92 to 118 (RRGLPVRGQRTKTNARTRKGPRKPIKK) is disordered.

This sequence belongs to the universal ribosomal protein uS13 family. As to quaternary structure, part of the 30S ribosomal subunit. Forms a loose heterodimer with protein S19. Forms two bridges to the 50S subunit in the 70S ribosome.

Functionally, located at the top of the head of the 30S subunit, it contacts several helices of the 16S rRNA. In the 70S ribosome it contacts the 23S rRNA (bridge B1a) and protein L5 of the 50S subunit (bridge B1b), connecting the 2 subunits; these bridges are implicated in subunit movement. Contacts the tRNAs in the A and P-sites. The protein is Small ribosomal subunit protein uS13 of Yersinia pestis.